Consider the following 283-residue polypeptide: DegV domain-containing protein BH3627 (283 aa).

In terms of domain architecture, DegV spans 4–281 (IAIVTDSTAY…EGSIGLSWYI (278 aa)). Positions 62 and 95 each coordinate hexadecanoate.

Its function is as follows. May bind long-chain fatty acids, such as palmitate, and may play a role in lipid transport or fatty acid metabolism. The sequence is that of DegV domain-containing protein BH3627 from Halalkalibacterium halodurans (strain ATCC BAA-125 / DSM 18197 / FERM 7344 / JCM 9153 / C-125) (Bacillus halodurans).